A 136-amino-acid chain; its full sequence is Serine--glyoxylate aminotransferase (136 aa).

This sequence belongs to the class-V pyridoxal-phosphate-dependent aminotransferase family. As to quaternary structure, homodimer. Pyridoxal 5'-phosphate is required as a cofactor. Expressed in leaves but not in root tissue or seedlings.

The protein localises to the peroxisome. It carries out the reaction glyoxylate + L-serine = 3-hydroxypyruvate + glycine. The enzyme catalyses glyoxylate + L-alanine = glycine + pyruvate. Inhibited by aminooxyacetate. The polypeptide is Serine--glyoxylate aminotransferase (Zea mays (Maize)).